The following is a 467-amino-acid chain: MSAIDAGARAPENLWRQEIRATLALAWPMVLTNLGQTAMTATDVMMMGRLGPDTLASGALGANLYFMPLIFGLGLMLATSPMIATELGRRRYSVRDLRRTVRQGLWLAILISIPIWIVLWHGEAILLAMGQEPALAHQAGIYLRWLEWAVLPFYGYIVLRSFISALERPGWALIIVFVAVACNALFNWVFMFGNLGFPAMGIAGSGLATSLSSTLMFAGMAAVVMLEKKFRRYRLFGRFWRSDWPRFNGLLRLGLPIAGILAFEVTIFNAAALLMGLIDADSLAAHAIAIQIASISFMVPLGLNQAVTVRVGLAHGAGNPEGVSRAGWTAFVIGVSFMALMGLVMVLWPHLLISAFIDLANPANARVIALAVSFLVFAALFQVFDGAQAVAAGMLRGLHDTKVPMIYAAIGYWGVGLPLGVLLAFHFGFHGVGIWIGLSSGLAVVAALLLTRWLRRDRIAPPLAFGH.

The next 12 helical transmembrane spans lie at 23 to 42, 62 to 84, 104 to 126, 141 to 163, 170 to 192, 202 to 224, 250 to 272, 287 to 309, 330 to 352, 367 to 384, 405 to 427, and 432 to 454; these read LALA…MTAT, ANLY…PMIA, GLWL…EAIL, IYLR…RSFI, GWAL…VFMF, IAGS…AAVV, LLRL…NAAA, AIAI…AVTV, AFVI…PHLL, VIAL…FQVF, MIYA…AFHF, and VGIW…TRWL.

The protein belongs to the multi antimicrobial extrusion (MATE) (TC 2.A.66.1) family.

The protein localises to the cell inner membrane. In terms of biological role, multidrug efflux pump. The sequence is that of Probable multidrug resistance protein NorM (norM) from Mesorhizobium japonicum (strain LMG 29417 / CECT 9101 / MAFF 303099) (Mesorhizobium loti (strain MAFF 303099)).